The chain runs to 84 residues: MRGSSNKKIDPRIHYLVPKHEVLNIDEAYKILKELGIRPEQLPWIRASDPVARSINAKPGDIIRIIRKSQLYGEVVSYRYVISG.

Belongs to the archaeal Rpo5/eukaryotic RPB5 RNA polymerase subunit family. Part of the 13-subunit RNA polymerase complex.

The protein localises to the cytoplasm. The enzyme catalyses RNA(n) + a ribonucleoside 5'-triphosphate = RNA(n+1) + diphosphate. In terms of biological role, DNA-dependent RNA polymerase (RNAP) catalyzes the transcription of DNA into RNA using the four ribonucleoside triphosphates as substrates. The protein is DNA-directed RNA polymerase subunit Rpo5 of Saccharolobus solfataricus (strain ATCC 35092 / DSM 1617 / JCM 11322 / P2) (Sulfolobus solfataricus).